Here is a 190-residue protein sequence, read N- to C-terminus: Adenine phosphoribosyltransferase (190 aa).

It belongs to the purine/pyrimidine phosphoribosyltransferase family. In terms of assembly, homodimer.

It localises to the cytoplasm. The enzyme catalyses AMP + diphosphate = 5-phospho-alpha-D-ribose 1-diphosphate + adenine. It functions in the pathway purine metabolism; AMP biosynthesis via salvage pathway; AMP from adenine: step 1/1. In terms of biological role, catalyzes a salvage reaction resulting in the formation of AMP, that is energically less costly than de novo synthesis. This chain is Adenine phosphoribosyltransferase, found in Treponema pallidum (strain Nichols).